A 167-amino-acid polypeptide reads, in one-letter code: Aphrodisin (167 aa).

The signal sequence occupies residues Met1–Ala16. A Pyrrolidone carboxylic acid modification is found at Gln17. Intrachain disulfides connect Cys54–Cys58 and Cys73–Cys165. Asn57 and Asn85 each carry an N-linked (GlcNAc...) asparagine glycan.

Belongs to the calycin superfamily. Lipocalin family. In terms of tissue distribution, expressed in the vagina, uterus, and Bartholin's glands of female hamsters. Secreted in vaginal discharge.

It localises to the secreted. Acts as an aphrodisiac pheromone, reliably eliciting copulatory behavior from male hamster. This is Aphrodisin from Cricetus cricetus (Black-bellied hamster).